A 248-amino-acid chain; its full sequence is Large ribosomal subunit protein uL30B (248 aa).

Positions 1 to 45 are disordered; it reads MSQKKQKIQVEQKVPENVAKKTQRDSKLRDAVAKRRTERLAANKT. A compositionally biased stretch (basic and acidic residues) spans 8–41; that stretch reads IQVEQKVPENVAKKTQRDSKLRDAVAKRRTERLA.

The protein belongs to the universal ribosomal protein uL30 family.

Binds to G-rich structures in 28S rRNA and in mRNAs. Plays a regulatory role in the translation apparatus; inhibits cell-free translation of mRNAs. This is Large ribosomal subunit protein uL30B (Rpl7-2) from Paramecium tetraurelia.